The primary structure comprises 432 residues: NADH-quinone oxidoreductase subunit D (432 aa).

This sequence belongs to the complex I 49 kDa subunit family. As to quaternary structure, NDH-1 is composed of 14 different subunits. Subunits NuoB, C, D, E, F, and G constitute the peripheral sector of the complex.

It localises to the cell membrane. It catalyses the reaction a quinone + NADH + 5 H(+)(in) = a quinol + NAD(+) + 4 H(+)(out). NDH-1 shuttles electrons from NADH, via FMN and iron-sulfur (Fe-S) centers, to quinones in the respiratory chain. The immediate electron acceptor for the enzyme in this species is believed to be a menaquinone. Couples the redox reaction to proton translocation (for every two electrons transferred, four hydrogen ions are translocated across the cytoplasmic membrane), and thus conserves the redox energy in a proton gradient. The polypeptide is NADH-quinone oxidoreductase subunit D (Mycobacterium marinum (strain ATCC BAA-535 / M)).